The following is a 241-amino-acid chain: Methylthioribulose-1-phosphate dehydratase (241 aa).

Over residues 1–17 (MAKQVENNNNDHLVQST) the composition is skewed to polar residues. Positions 1-21 (MAKQVENNNNDHLVQSTDPEH) are disordered. Cysteine 100 serves as a coordination point for substrate. Residues histidine 117 and histidine 119 each coordinate Zn(2+). The active-site Proton donor/acceptor is glutamate 146. Zn(2+) is bound at residue histidine 202.

It belongs to the aldolase class II family. MtnB subfamily. Requires Zn(2+) as cofactor.

It localises to the cytoplasm. The enzyme catalyses 5-(methylsulfanyl)-D-ribulose 1-phosphate = 5-methylsulfanyl-2,3-dioxopentyl phosphate + H2O. The protein operates within amino-acid biosynthesis; L-methionine biosynthesis via salvage pathway; L-methionine from S-methyl-5-thio-alpha-D-ribose 1-phosphate: step 2/6. In terms of biological role, catalyzes the dehydration of methylthioribulose-1-phosphate (MTRu-1-P) into 2,3-diketo-5-methylthiopentyl-1-phosphate (DK-MTP-1-P). The chain is Methylthioribulose-1-phosphate dehydratase from Aspergillus flavus (strain ATCC 200026 / FGSC A1120 / IAM 13836 / NRRL 3357 / JCM 12722 / SRRC 167).